We begin with the raw amino-acid sequence, 262 residues long: uncharacterized protein (262 aa).

Residues 1–211 (MAFHVMIIPS…LLYLLDSYLE (211 aa)) enclose the Radical SAM core domain. 3 residues coordinate [4Fe-4S] cluster: Cys-13, Cys-17, and Cys-20.

This sequence belongs to the radical SAM superfamily. Anaerobic sulfatase-maturating enzyme family. It depends on [4Fe-4S] cluster as a cofactor.

This is an uncharacterized protein from Methanothermobacter thermautotrophicus (strain ATCC 29096 / DSM 1053 / JCM 10044 / NBRC 100330 / Delta H) (Methanobacterium thermoautotrophicum).